A 597-amino-acid chain; its full sequence is Serine/arginine repetitive matrix protein 3 (597 aa).

The span at 1–31 (MSSTVNNGAASMQSTPDAANGFPQPSSSSGT) shows a compositional bias: polar residues. Positions 1-47 (MSSTVNNGAASMQSTPDAANGFPQPSSSSGTWPRAEEELRAAEPGLV) are disordered. In terms of domain architecture, CWF21 spans 55-98 (LDHERKRRVELKCMELQEMMEEQGYSEEEIRQKVGTFRQMLMEK). Residues 99 to 109 (EGVLTREDRPG) show a composition bias toward basic and acidic residues. The segment at 99-597 (EGVLTREDRP…GPAPLPPPAA (499 aa)) is disordered. Basic residues-rich tracts occupy residues 149–158 (RGHRGYRTKH), 168–186 (PKKK…KKRR), 199–211 (LRKK…KHRR), and 219–243 (RRKR…KKRP). Composition is skewed to low complexity over residues 257-278 (SGSS…PSRL) and 291-313 (SQRS…SPQR). Composition is skewed to gly residues over residues 315–328 (GGSG…GGRP) and 374–383 (GRGGRAAGGA). Basic residues predominate over residues 384–412 (GRRRRRRRRRRRSRSSASAPRRRGRRRPR). 3 stretches are compositionally biased toward low complexity: residues 417–433 (RGSS…SDSG), 466–476 (RPASTSPSPGA), and 488–507 (SSRS…SPSK). Over residues 530-549 (LSRDKDGEGRARHSEAEATR) the composition is skewed to basic and acidic residues. Basic residues predominate over residues 550–565 (ARRRSRSYSPIRKRRR).

The protein belongs to the CWC21 family. Expressed in breast cancer cell lines.

Functionally, may play a role in regulating breast cancer cell invasiveness. May be involved in RYBP-mediated breast cancer progression. This is Serine/arginine repetitive matrix protein 3 (SRRM3) from Homo sapiens (Human).